Here is a 291-residue protein sequence, read N- to C-terminus: Putative phosphatase MG263 (291 aa).

Catalysis depends on aspartate 11, which acts as the Nucleophile. Aspartate 11 is a Mg(2+) binding site. Leucine 12 serves as a coordination point for phosphate. Aspartate 13 provides a ligand contact to Mg(2+). Residues 60–61 (TG) and lysine 217 contribute to the phosphate site. Position 241 (aspartate 241) interacts with Mg(2+). Asparagine 244 lines the phosphate pocket.

It belongs to the HAD-like hydrolase superfamily. Cof family. Requires Mg(2+) as cofactor.

The sequence is that of Putative phosphatase MG263 from Mycoplasma genitalium (strain ATCC 33530 / DSM 19775 / NCTC 10195 / G37) (Mycoplasmoides genitalium).